The chain runs to 195 residues: uncharacterized protein (195 aa).

2 disordered regions span residues Met-1 to Tyr-51 and Ser-160 to Asn-195. A compositionally biased stretch (polar residues) spans Ser-13–Pro-28. Positions Tyr-170–Arg-189 are enriched in basic residues.

This is an uncharacterized protein from Acanthamoeba polyphaga mimivirus (APMV).